Consider the following 109-residue polypeptide: MNINVDVKQNENDIQVNIAGEIDVYSAPVLREKLVPLAEQGADLRICLKDVSYMDSTGLGVFVGTFKMVKKQGGSLKLENLSERLIRLFDITGLKDIIDISAKSEGGVQ.

In terms of domain architecture, STAS spans 3–109 (INVDVKQNEN…ISAKSEGGVQ (107 aa)). Residues Ser-52 and Ser-56 each carry the phosphoserine modification. Phosphothreonine is present on Thr-57.

It belongs to the anti-sigma-factor antagonist family. Monomer. In stressed cells, forms a complex with RsbW. The predominant form of this complex has a stoichiometry of 2:2 (one dimer of RsbW is bound by two monomers of RsbV). Binds to RsbW in the presence of low levels of ATP or under conditions of energy or environmental stress (through dephosphorylation by RsbP or RsbU). In terms of processing, phosphorylated by RsbW on a serine residue. Dephosphorylated by RsbP or RsbU.

Positive regulator of sigma-B activity. Non-phosphorylated RsbV binds to RsbW, preventing its association with sigma-B. When phosphorylated, releases RsbW, which is then free to complex with and inactivate sigma-B. This Bacillus subtilis (strain 168) protein is Anti-sigma-B factor antagonist (rsbV).